The primary structure comprises 312 residues: 4-diphosphocytidyl-2-C-methyl-D-erythritol kinase (312 aa).

Residue Lys16 is part of the active site. 101–111 (PIGAGLAGGSS) contributes to the ATP binding site. The active site involves Asp143.

This sequence belongs to the GHMP kinase family. IspE subfamily.

It carries out the reaction 4-CDP-2-C-methyl-D-erythritol + ATP = 4-CDP-2-C-methyl-D-erythritol 2-phosphate + ADP + H(+). The protein operates within isoprenoid biosynthesis; isopentenyl diphosphate biosynthesis via DXP pathway; isopentenyl diphosphate from 1-deoxy-D-xylulose 5-phosphate: step 3/6. In terms of biological role, catalyzes the phosphorylation of the position 2 hydroxy group of 4-diphosphocytidyl-2C-methyl-D-erythritol. This Prochlorococcus marinus subsp. pastoris (strain CCMP1986 / NIES-2087 / MED4) protein is 4-diphosphocytidyl-2-C-methyl-D-erythritol kinase.